Consider the following 100-residue polypeptide: NADH-quinone oxidoreductase subunit K (100 aa).

A run of 3 helical transmembrane segments spans residues 4-24 (LQHG…GLII), 29-49 (LFML…FVVV), and 60-80 (VMFI…LALL).

This sequence belongs to the complex I subunit 4L family. As to quaternary structure, NDH-1 is composed of 13 different subunits. Subunits NuoA, H, J, K, L, M, N constitute the membrane sector of the complex.

The protein resides in the cell inner membrane. It carries out the reaction a quinone + NADH + 5 H(+)(in) = a quinol + NAD(+) + 4 H(+)(out). In terms of biological role, NDH-1 shuttles electrons from NADH, via FMN and iron-sulfur (Fe-S) centers, to quinones in the respiratory chain. The immediate electron acceptor for the enzyme in this species is believed to be ubiquinone. Couples the redox reaction to proton translocation (for every two electrons transferred, four hydrogen ions are translocated across the cytoplasmic membrane), and thus conserves the redox energy in a proton gradient. This is NADH-quinone oxidoreductase subunit K from Photorhabdus laumondii subsp. laumondii (strain DSM 15139 / CIP 105565 / TT01) (Photorhabdus luminescens subsp. laumondii).